A 350-amino-acid polypeptide reads, in one-letter code: DNA polymerase IV (350 aa).

Residues 4-185 enclose the UmuC domain; the sequence is IIHIDMDCFY…LPLGKLPGIG (182 aa). Positions 8 and 103 each coordinate Mg(2+). Residue Glu-104 is part of the active site.

The protein belongs to the DNA polymerase type-Y family. As to quaternary structure, monomer. Mg(2+) serves as cofactor.

Its subcellular location is the cytoplasm. The enzyme catalyses DNA(n) + a 2'-deoxyribonucleoside 5'-triphosphate = DNA(n+1) + diphosphate. In terms of biological role, poorly processive, error-prone DNA polymerase involved in untargeted mutagenesis. Copies undamaged DNA at stalled replication forks, which arise in vivo from mismatched or misaligned primer ends. These misaligned primers can be extended by PolIV. Exhibits no 3'-5' exonuclease (proofreading) activity. May be involved in translesional synthesis, in conjunction with the beta clamp from PolIII. This chain is DNA polymerase IV, found in Aeromonas hydrophila subsp. hydrophila (strain ATCC 7966 / DSM 30187 / BCRC 13018 / CCUG 14551 / JCM 1027 / KCTC 2358 / NCIMB 9240 / NCTC 8049).